Consider the following 640-residue polypeptide: MSERKEGRGKGKGKKKERGSGKKPESAAGSQSPALPPRLKEMKSQESAAGSKLVLRCETSSEYSSLRFKWFKNGNELNRKNKPQNIKIQKKPGKSELRINKASLADSGEYMCKVISKLGNDSASANITIVESNEIITGMPASTEGAYVSSESPIRISVSTEGANTSSSTSTSTTGTSHLVKCAEKEKTFCVNGGECFMVKDLSNPSRYLCKCQPGFTGARCTENVPMKVQNQEKAEELYQKRVLTITGICIALLVVGIMCVVAYCKTKKQRKKLHDRLRQSLRSERNNMMNIANGPHHPNPPPENVQLVNQYVSKNVISSEHIVEREAETSFSTSHYTSTAHHSTTVTQTPSHSWSNGHTESILSESHSVIVMSSVENSRHSSPTGGPRGRLNGTGGPRECNSFLRHARETPDSYRDSPHSERYVSAMTTPARMSPVDFHTPSSPKSPPSEMSPPVSSMTVSMPSMAVSPFMEEERPLLLVTPPRLREKKFDHHPQQFSSFHHNPAHDSNSLPASPLRIVEDEEYETTQEYEPAQEPVKKLANSRRAKRTKPNGHIANRLEVDSNTSSQSSNSESETEDERVGEDTPFLGIQNPLAASLEATPAFRLADSRTNPAGRFSTQEEIQARLSSVIANQDPIAV.

Positions 1–19 are excised as a propeptide; the sequence is MSERKEGRGKGKGKKKERG. The segment at 1–53 is disordered; the sequence is MSERKEGRGKGKGKKKERGSGKKPESAAGSQSPALPPRLKEMKSQESAAGSKL. Over 20–242 the chain is Extracellular; that stretch reads SGKKPESAAG…EKAEELYQKR (223 aa). In terms of domain architecture, Ig-like C2-type spans 37-128; sequence PRLKEMKSQE…GNDSASANIT (92 aa). Cysteine 57 and cysteine 112 form a disulfide bridge. N-linked (GlcNAc...) asparagine glycosylation is found at asparagine 120, asparagine 126, and asparagine 164. An EGF-like domain is found at 178–222; it reads HLVKCAEKEKTFCVNGGECFMVKDLSNPSRYLCKCQPGFTGARCT. 3 disulfides stabilise this stretch: cysteine 182/cysteine 196, cysteine 190/cysteine 210, and cysteine 212/cysteine 221. The helical transmembrane segment at 243–265 threads the bilayer; the sequence is VLTITGICIALLVVGIMCVVAYC. Over 266–640 the chain is Cytoplasmic; sequence KTKKQRKKLH…VIANQDPIAV (375 aa). A compositionally biased stretch (low complexity) spans 334-350; it reads TSHYTSTAHHSTTVTQT. Disordered stretches follow at residues 334-360, 375-399, 433-461, and 524-588; these read TSHY…NGHT, SVEN…GGPR, RMSP…SMTV, and EYET…DTPF. Over residues 351–360 the composition is skewed to polar residues; sequence PSHSWSNGHT. Positions 387-397 are enriched in gly residues; it reads GPRGRLNGTGG. Positions 542 to 552 are enriched in basic residues; that stretch reads ANSRRAKRTKP. Residues 563-574 are compositionally biased toward low complexity; sequence DSNTSSQSSNSE.

The protein belongs to the neuregulin family. As to quaternary structure, the cytoplasmic domain interacts with the LIM domain region of LIMK1. Forms a ternary complex with ERBB3 and ITGAV:ITGB3 or ITGA6:ITGB4. Interacts with NRDC and BACE1. Proteolytic cleavage close to the plasma membrane on the external face leads to the release of the soluble growth factor form. In terms of processing, N- and O-glycosylated. Extensive glycosylation precedes the proteolytic cleavage. As to expression, type I isoforms are the predominant forms expressed in the endocardium. Isoform alpha is expressed in breast, ovary, testis, prostate, heart, skeletal muscle, lung, placenta liver, kidney, salivary gland, small intestine and brain, but not in uterus, stomach, pancreas, and spleen. Isoform 3 is the predominant form in mesenchymal cells and in non-neuronal organs, whereas isoform 6 is the major neuronal form. Isoform 8 is expressed in spinal cord and brain. Isoform 9 is the major form in skeletal muscle cells; in the nervous system it is expressed in spinal cord and brain. Also detected in adult heart, placenta, lung, liver, kidney, and pancreas. Isoform 10 is expressed in nervous system: spinal cord motor neurons, dorsal root ganglion neurons, and brain. Predominant isoform expressed in sensory and motor neurons. Not detected in adult heart, placenta, lung, liver, skeletal muscle, kidney, and pancreas. Not expressed in fetal lung, liver and kidney. Type IV isoforms are brain-specific.

Its subcellular location is the cell membrane. It is found in the secreted. The protein localises to the nucleus. The protein resides in the membrane. Functionally, direct ligand for ERBB3 and ERBB4 tyrosine kinase receptors. Concomitantly recruits ERBB1 and ERBB2 coreceptors, resulting in ligand-stimulated tyrosine phosphorylation and activation of the ERBB receptors. The multiple isoforms perform diverse functions such as inducing growth and differentiation of epithelial, glial, neuronal, and skeletal muscle cells; inducing expression of acetylcholine receptor in synaptic vesicles during the formation of the neuromuscular junction; stimulating lobuloalveolar budding and milk production in the mammary gland and inducing differentiation of mammary tumor cells; stimulating Schwann cell proliferation; implication in the development of the myocardium such as trabeculation of the developing heart. Isoform 10 may play a role in motor and sensory neuron development. Binds to ERBB4. Binds to ERBB3. Acts as a ligand for integrins and binds (via EGF domain) to integrins ITGAV:ITGB3 or ITGA6:ITGB4. Its binding to integrins and subsequent ternary complex formation with integrins and ERRB3 are essential for NRG1-ERBB signaling. Induces the phosphorylation and activation of MAPK3/ERK1, MAPK1/ERK2 and AKT1. Ligand-dependent ERBB4 endocytosis is essential for the NRG1-mediated activation of these kinases in neurons. The polypeptide is Pro-neuregulin-1, membrane-bound isoform (NRG1) (Homo sapiens (Human)).